A 905-amino-acid chain; its full sequence is Protein translocase subunit SecA (905 aa).

ATP contacts are provided by residues Gln89, 107–111, and Asp502; that span reads GEGKT. Residues 837 to 885 are disordered; sequence EQTDVGDPILNDQNKKNSSTLWTPSQENKFVNPKDRNPSDSTTWGKVGR. Positions 852–865 are enriched in polar residues; it reads KNSSTLWTPSQENK. Residues Cys889, Cys891, Cys900, and His901 each coordinate Zn(2+).

Belongs to the SecA family. As to quaternary structure, monomer and homodimer. Part of the essential Sec protein translocation apparatus which comprises SecA, SecYEG and auxiliary proteins SecDF-YajC and YidC. Zn(2+) is required as a cofactor.

The protein resides in the cell inner membrane. It localises to the cytoplasm. It carries out the reaction ATP + H2O + cellular proteinSide 1 = ADP + phosphate + cellular proteinSide 2.. Its function is as follows. Part of the Sec protein translocase complex. Interacts with the SecYEG preprotein conducting channel. Has a central role in coupling the hydrolysis of ATP to the transfer of proteins into and across the cell membrane, serving both as a receptor for the preprotein-SecB complex and as an ATP-driven molecular motor driving the stepwise translocation of polypeptide chains across the membrane. The chain is Protein translocase subunit SecA from Bartonella henselae (strain ATCC 49882 / DSM 28221 / CCUG 30454 / Houston 1) (Rochalimaea henselae).